Consider the following 393-residue polypeptide: Probable hydrolase sll0100 (393 aa).

This sequence belongs to the peptidase M20 family.

In Synechocystis sp. (strain ATCC 27184 / PCC 6803 / Kazusa), this protein is Probable hydrolase sll0100.